The primary structure comprises 54 residues: MSNGTAVMGKINNKKTHITCRRCGHHTYNVRTKRCSHCGFPAPRIRSYKWAKAK.

The Zn(2+) site is built by cysteine 20, cysteine 23, cysteine 35, and cysteine 38. Residues 20–38 form a C4-type zinc finger; it reads CRRCGHHTYNVRTKRCSHC.

Belongs to the eukaryotic ribosomal protein eL37 family. Zn(2+) serves as cofactor.

Binds to the 23S rRNA. The chain is Large ribosomal subunit protein eL37 (rpl37e) from Thermoplasma volcanium (strain ATCC 51530 / DSM 4299 / JCM 9571 / NBRC 15438 / GSS1).